Reading from the N-terminus, the 224-residue chain is MYEFDWSSIVPSLPYLLDGLVITLKITVTAVVIGILWGTMLAVMRLSSFAPVAWFAKAYVNVFRSIPLVMVLLWFYLIVPGFLQNVLGLSPKNDIRLISAMVAFSMFEAAYYSEIIRAGIQSISRGQSSAALALGMTHWQSMKLIILPQAFRAMVPLLLTQGIVLFQDTSLVYVLSLADFFRTASTIGERDGTQVEMILFAGFVYFVISLSASLLVSYLKRRTA.

Residues 1 to 19 are Periplasmic-facing; sequence MYEFDWSSIVPSLPYLLDG. A helical transmembrane segment spans residues 20–40; it reads LVITLKITVTAVVIGILWGTM. Positions 20-216 constitute an ABC transmembrane type-1 domain; it reads LVITLKITVT…VISLSASLLV (197 aa). Residues 41–67 lie on the Cytoplasmic side of the membrane; the sequence is LAVMRLSSFAPVAWFAKAYVNVFRSIP. The chain crosses the membrane as a helical span at residues 68 to 88; it reads LVMVLLWFYLIVPGFLQNVLG. The Periplasmic segment spans residues 89-94; sequence LSPKND. Residues 95–112 form a helical membrane-spanning segment; the sequence is IRLISAMVAFSMFEAAYY. The Cytoplasmic segment spans residues 113–154; that stretch reads SEIIRAGIQSISRGQSSAALALGMTHWQSMKLIILPQAFRAM. The chain crosses the membrane as a helical span at residues 155–175; sequence VPLLLTQGIVLFQDTSLVYVL. The Periplasmic segment spans residues 176–196; that stretch reads SLADFFRTASTIGERDGTQVE. A helical membrane pass occupies residues 197–217; the sequence is MILFAGFVYFVISLSASLLVS. Over 218-224 the chain is Cytoplasmic; the sequence is YLKRRTA.

It belongs to the binding-protein-dependent transport system permease family. HisMQ subfamily. In terms of assembly, the complex is composed of two ATP-binding proteins (GltL), two transmembrane proteins (GltJ and GltK) and a solute-binding protein (GltI).

It localises to the cell inner membrane. Part of the ABC transporter complex GltIJKL involved in glutamate and aspartate uptake. Probably responsible for the translocation of the substrate across the membrane. This chain is Glutamate/aspartate import permease protein GltK (gltK), found in Escherichia coli O157:H7.